The following is a 1335-amino-acid chain: Regulatory-associated protein of mTOR (1335 aa).

A phosphoserine mark is found at Ser-44 and Ser-122. Ser-696 bears the Phosphoserine; by MAPK8 mark. An O-linked (GlcNAc) threonine glycan is attached at Thr-700. Thr-706 carries the phosphothreonine; by MAPK8 modification. 2 positions are modified to phosphoserine; by RPS6KA1: Ser-719 and Ser-721. Ser-722 is modified (phosphoserine; by AMPK and RPS6KA1). The residue at position 738 (Ser-738) is a Phosphoserine. Position 791 is a phosphoserine; by PKA (Ser-791). Ser-792 carries the post-translational modification Phosphoserine; by AMPK. Phosphoserine occurs at positions 836 and 855. The interval 850-943 (VLDTSSLTQS…PEQTADDADD (94 aa)) is disordered. Positions 851–866 (LDTSSLTQSAPASPTN) are enriched in polar residues. Position 859 is a phosphoserine; by MTOR (Ser-859). Ser-863 is subject to Phosphoserine; by MAPK8, MTOR and NLK. Thr-865 is subject to Phosphothreonine. Over residues 874 to 887 (AGGSPPASSTSSSS) the composition is skewed to low complexity. Ser-877 carries the post-translational modification Phosphoserine; by TBK1. Residues Lys-932 and Lys-948 each participate in a glycyl lysine isopeptide (Lys-Gly) (interchain with G-Cter in ubiquitin) cross-link. A Phosphoserine modification is found at Ser-982. 7 WD repeats span residues 1020–1061 (NRNP…DYFH), 1065–1106 (PRYT…EKNP), 1121–1160 (TTRG…KVQD), 1164–1203 (GADS…SECR), 1209–1249 (EHTA…SVNV), 1251–1291 (QIVK…NNIK), and 1299–1335 (QRVG…KRVR). Position 1097 is an N6-acetyllysine (Lys-1097).

It belongs to the WD repeat RAPTOR family. In terms of assembly, part of the mechanistic target of rapamycin complex 1 (mTORC1) which contains MTOR, MLST8 and RPTOR. mTORC1 associates with AKT1S1/PRAS40, which inhibits its activity. mTORC1 associates with DEPTOR, which regulates its activity. mTORC1 binds to and is inhibited by FKBP12-rapamycin. Forms a complex with MTOR under both leucine-rich and -poor conditions. Interacts with (via TOS motifs) EIF4EBP1 and RPS6KB1; interaction is independent of its association with MTOR. Binds preferentially to poorly or non-phosphorylated forms of EIF4EBP1, and this binding is critical to the ability of MTOR to catalyze phosphorylation. Interacts with ULK1 in a nutrient-dependent manner; the interaction is reduced during starvation. Interacts with GTP-bound form of RagA/RRAGA or RagB/RRAGB and GDP-bound form of RagC/RRAGC or RagD/RRAGD, promoting recruitment of mTORC1 to the lysosomes. Interacts (when phosphorylated by AMPK) with 14-3-3 protein, leading to inhibition of its activity. Interacts with SPAG5; SPAG5 competes with MTOR for RPTOR-binding, resulting in decreased mTORC1 formation. Interacts with WAC; WAC positively regulates MTOR activity by promoting the assembly of the TTT complex composed of TELO2, TTI1 and TTI2 and the RUVBL complex composed of RUVBL1 and RUVBL2 into the TTT-RUVBL complex which leads to the dimerization of the mTORC1 complex and its subsequent activation. Interacts with G3BP1. The complex formed with G3BP1 and SPAG5 is increased by oxidative stress. Interacts with HTR6. Interacts with PIH1D1. Interacts with LARP1. Interacts with BRAT1. Interacts with SIK3. Interacts with SLC38A7; this interaction mediates the recruitment of mTORC1 to the lysosome and its subsequent activation. (Microbial infection) Interacts with vaccinia virus protein F17; this interaction dysregulates mTOR. Post-translationally, insulin-stimulated phosphorylation at Ser-863 by MTOR and MAPK8 regulates mTORC1 activity. Phosphorylated at Ser-863 by NLK in response to stress, disrupting the interaction with small GTPases Rag (RagA/RRAGA, RagB/RRAGB, RagC/RRAGC and/or RagD/RRAGD), thereby preventing lysosome recruitment and activation of the mTORC1 complex. Osmotic stress also induces phosphorylation at Ser-696, Thr-706 and Ser-863 by MAPK8. Ser-863 phosphorylation is required for phosphorylation at Ser-855 and Ser-859. In response to nutrient limitation, phosphorylated at Ser-722 and Ser-792 by AMPK; phosphorylation promotes interaction with 14-3-3 proteins, leading to negative regulation of the mTORC1 complex. Phosphorylation at Ser-722 and Ser-792 by AMPK in response to glucose starvation inhibits O-GlcNAcylation by OGT and subsequent activation of mTORC1. In response to growth factors, phosphorylated at Ser-719, Ser-721 and Ser-722 by RPS6KA1, which stimulates mTORC1 activity. Phosphorylation at Ser-791 by PKA downstream of cAMP inhibits the mTORC1 complex. Phosphorylated at Ser-877 by TBK1, leading to negative regulation of the mTORC1 complex. O-GlcNAcylated by OGT upon glucose sufficiency, promoting interaction with small GTPases Rag (RagA/RRAGA, RagB/RRAGB, RagC/RRAGC and/or RagD/RRAGD) and subsequent recruitment of mTORC1 to lysosomal membranes, leading to activation of the mTORC1 complex. Phosphorylation at Ser-722 and Ser-792 by AMPK in response to glucose starvation inhibits O-GlcNAcylation. In terms of processing, acetylation at Lys-1097 by EP300/p300 in response to leucine metabolite acetyl-coA promotes its activity, leading to activation of the mTORC1 complex. Acetylation is decreased in response to fasting. Post-translationally, ubiquitinated, leading to its degradation by the proteasome. Deubiquitinated by OTUB1 via a non-catalytic mechanism. Ubiquitinated by an E3 ubiquitin ligase complex containing VHL. As to expression, highly expressed in skeletal muscle, and in a lesser extent in brain, lung, small intestine, kidney and placenta. Widely expressed, with highest levels in nasal mucosa and pituitary and lowest in spleen.

It is found in the lysosome membrane. Its subcellular location is the cytoplasm. The protein localises to the cytoplasmic granule. In terms of biological role, component of the mechanistic target of rapamycin complex 1 (mTORC1), an evolutionarily conserved central nutrient sensor that stimulates anabolic reactions and macromolecule biosynthesis to promote cellular biomass generation and growth. In response to nutrients, growth factors or amino acids, mTORC1 is recruited to the lysosome membrane and promotes protein, lipid and nucleotide synthesis by phosphorylating several substrates, such as ribosomal protein S6 kinase (RPS6KB1 and RPS6KB2) and EIF4EBP1 (4E-BP1). In the same time, it inhibits catabolic pathways by phosphorylating the autophagy initiation components ULK1 and ATG13, as well as transcription factor TFEB, a master regulators of lysosomal biogenesis and autophagy. The mTORC1 complex is inhibited in response to starvation and amino acid depletion. Within the mTORC1 complex, RPTOR acts both as a molecular adapter, which (1) mediates recruitment of mTORC1 to lysosomal membranes via interaction with small GTPases Rag (RagA/RRAGA, RagB/RRAGB, RagC/RRAGC and/or RagD/RRAGD), and a (2) substrate-specific adapter, which promotes substrate specificity by binding to TOS motif-containing proteins and direct them towards the active site of the MTOR kinase domain for phosphorylation. mTORC1 complex regulates many cellular processes, such as odontoblast and osteoclast differentiation or neuronal transmission. mTORC1 complex in excitatory neuronal transmission is required for the prosocial behavior induced by the psychoactive substance lysergic acid diethylamide (LSD). The chain is Regulatory-associated protein of mTOR from Homo sapiens (Human).